The sequence spans 416 residues: STAM-binding protein-like (416 aa).

The disordered stretch occupies residues 214–244 (SYGTVQPHPPAVDRSLKPSSYGSNSSGVTSD). Over residues 230 to 243 (KPSSYGSNSSGVTS) the composition is skewed to low complexity. The 132-residue stretch at 249–380 (VKIPRDVCCK…LTDYGMKEIG (132 aa)) folds into the MPN domain. Positions 327, 329, 340, 342, 382, 388, and 390 each coordinate Zn(2+). The JAMM motif motif lies at 327–340 (HTHPTQTAFLSSVD).

The protein belongs to the peptidase M67C family. Requires Zn(2+) as cofactor.

Its function is as follows. Zinc metalloprotease that specifically cleaves 'Lys-63'-linked polyubiquitin chains. Does not cleave 'Lys-48'-linked polyubiquitin chains. Functions at the endosome and is able to oppose the ubiquitin-dependent sorting of receptors to lysosomes. The chain is STAM-binding protein-like (stambp) from Xenopus laevis (African clawed frog).